The sequence spans 338 residues: tRNA N6-adenosine threonylcarbamoyltransferase (338 aa).

2 residues coordinate Fe cation: H114 and H118. Residues 136–140, D169, G182, D186, and N275 each bind substrate; that span reads LVSGG. Residue D301 participates in Fe cation binding.

Belongs to the KAE1 / TsaD family. Fe(2+) is required as a cofactor.

The protein localises to the cytoplasm. The enzyme catalyses L-threonylcarbamoyladenylate + adenosine(37) in tRNA = N(6)-L-threonylcarbamoyladenosine(37) in tRNA + AMP + H(+). Its function is as follows. Required for the formation of a threonylcarbamoyl group on adenosine at position 37 (t(6)A37) in tRNAs that read codons beginning with adenine. Is involved in the transfer of the threonylcarbamoyl moiety of threonylcarbamoyl-AMP (TC-AMP) to the N6 group of A37, together with TsaE and TsaB. TsaD likely plays a direct catalytic role in this reaction. The protein is tRNA N6-adenosine threonylcarbamoyltransferase of Streptococcus equi subsp. equi (strain 4047).